We begin with the raw amino-acid sequence, 481 residues long: MKHKGIVLKLTKSKAIISTNDFQCYYIKRSPTIYVGKEVEFTNKDIVTKKSVLIKPALSVACFILLIACVLSLSKIINNISPKVFAYISVDINPSFEIEIDDMGNVLNLLPLNDDAKVIADKLEIDKINVSNAIDIIINEAIKSNVINENEKDFILVSSTLNIKKEENSQQYQSEKEKLDIIINSLKDSIEKSGKADVYIVQADVNEREAARSKGISTGRYVLYNKYKDLENDLSLEDAKDADVNVLIKSMLDVASEERNPEESPKMTPTPTPTHTATHTPTDAPTPKPANTPTSTPAAKPSPKTASNSASTSTPAPKPTSTPTPTLMPTPTPTPTPADKIAYGQFMKFESSNYRGYYIRVKSFSGRIDPYVNPVEDSMFKIVPGLADPSCISFESKTYPGYYLKHENFRVILKKYEDTDLFREDATFRVVPGWADENMISFQSYNYPYRYIRHRDFELYIENIKTDLDRKDATFIGIKVD.

The Cytoplasmic portion of the chain corresponds to 1-50 (MKHKGIVLKLTKSKAIISTNDFQCYYIKRSPTIYVGKEVEFTNKDIVTKK). In terms of domain architecture, RsgI N-terminal anti-sigma spans 3–50 (HKGIVLKLTKSKAIISTNDFQCYYIKRSPTIYVGKEVEFTNKDIVTKK). The helical transmembrane segment at 51 to 71 (SVLIKPALSVACFILLIACVL) threads the bilayer. The Extracellular segment spans residues 72–481 (SLSKIINNIS…DATFIGIKVD (410 aa)). The tract at residues 255 to 339 (ASEERNPEES…TPTPTPTPAD (85 aa)) is disordered. The span at 256 to 265 (SEERNPEESP) shows a compositional bias: basic and acidic residues. Low complexity-rich tracts occupy residues 266–283 (KMTPTPTPTHTATHTPTD) and 291–315 (NTPTSTPAAKPSPKTASNSASTSTP). Positions 316–336 (APKPTSTPTPTLMPTPTPTPT) are enriched in pro residues.

Interacts (via RsgI N-terminal anti-sigma domain) with SigI5.

The protein resides in the cell membrane. Its function is as follows. Anti-sigma factor for SigI5. Negatively regulates SigI5 activity through direct interaction. Binding of the polysaccharide substrate to the extracellular C-terminal sensing domain of RsgI5 may induce a conformational change in its N-terminal cytoplasmic region, leading to the release and activation of SigI5. This is Anti-sigma-I factor RsgI5 from Acetivibrio thermocellus (strain ATCC 27405 / DSM 1237 / JCM 9322 / NBRC 103400 / NCIMB 10682 / NRRL B-4536 / VPI 7372) (Clostridium thermocellum).